Consider the following 402-residue polypeptide: Zinc finger CCCH domain-containing protein 35 (402 aa).

C3H1-type zinc fingers lie at residues 117–144 (CYSG…HGVF) and 152–176 (RYRT…HTPD). 2 disordered regions span residues 180-211 (VLPP…AESY) and 232-258 (SSPT…DAAG). The segment covering 183 to 192 (PSQQQGSNSP) has biased composition (polar residues). A compositionally biased stretch (low complexity) spans 232 to 241 (SSPTSTLVSP). Positions 242-253 (PRSPPSESPPLS) are enriched in pro residues.

The protein is Zinc finger CCCH domain-containing protein 35 of Oryza sativa subsp. japonica (Rice).